The following is a 409-amino-acid chain: Imidazolonepropionase (409 aa).

2 residues coordinate Fe(3+): His78 and His80. Residues His78 and His80 each coordinate Zn(2+). 4-imidazolone-5-propanoate-binding residues include Arg87, Tyr150, and His183. Tyr150 provides a ligand contact to N-formimidoyl-L-glutamate. His248 is a binding site for Fe(3+). His248 lines the Zn(2+) pocket. Gln251 contacts 4-imidazolone-5-propanoate. Asp323 serves as a coordination point for Fe(3+). Residue Asp323 coordinates Zn(2+). N-formimidoyl-L-glutamate contacts are provided by Asn325 and Gly327. 4-imidazolone-5-propanoate is bound at residue Thr328.

It belongs to the metallo-dependent hydrolases superfamily. HutI family. Requires Zn(2+) as cofactor. Fe(3+) serves as cofactor.

The protein localises to the cytoplasm. The catalysed reaction is 4-imidazolone-5-propanoate + H2O = N-formimidoyl-L-glutamate. The protein operates within amino-acid degradation; L-histidine degradation into L-glutamate; N-formimidoyl-L-glutamate from L-histidine: step 3/3. Catalyzes the hydrolytic cleavage of the carbon-nitrogen bond in imidazolone-5-propanoate to yield N-formimidoyl-L-glutamate. It is the third step in the universal histidine degradation pathway. The protein is Imidazolonepropionase of Mesorhizobium japonicum (strain LMG 29417 / CECT 9101 / MAFF 303099) (Mesorhizobium loti (strain MAFF 303099)).